We begin with the raw amino-acid sequence, 710 residues long: Prolyl endopeptidase (710 aa).

Position 1 is an N-acetylmethionine (M1). Position 157 is an N6-acetyllysine (K157). Catalysis depends on charge relay system residues S554, D641, and H680.

The protein belongs to the peptidase S9A family. In terms of assembly, monomer. The N-terminus is blocked.

It is found in the cytoplasm. The enzyme catalyses Hydrolysis of Pro-|-Xaa &gt;&gt; Ala-|-Xaa in oligopeptides.. Cleaves peptide bonds on the C-terminal side of prolyl residues within peptides that are up to approximately 30 amino acids long. In Homo sapiens (Human), this protein is Prolyl endopeptidase (PREP).